Reading from the N-terminus, the 561-residue chain is Magnesium-chelatase 60 kDa subunit (561 aa).

Disordered regions lie at residues 234–268 (PLQE…DPLD) and 298–324 (RAAS…SRKG). A compositionally biased stretch (pro residues) spans 237–249 (EAPPPPPPPPEPP). A compositionally biased stretch (acidic residues) spans 250–265 (EPNEGENQQDEQDQID). A compositionally biased stretch (basic residues) spans 314–323 (RRGRPLPSRK). The 181-residue stretch at 379–559 (VLIFAVDASG…KMADVLGAAL (181 aa)) folds into the VWFA domain.

The protein belongs to the Mg-chelatase subunits D/I family.

The catalysed reaction is protoporphyrin IX + Mg(2+) + ATP + H2O = Mg-protoporphyrin IX + ADP + phosphate + 3 H(+). The protein operates within porphyrin-containing compound metabolism; bacteriochlorophyll biosynthesis. Functionally, involved in bacteriochlorophyll biosynthesis; introduces a magnesium ion into protoporphyrin IX to yield Mg-protoporphyrin IX. This Rhodobacter capsulatus (strain ATCC BAA-309 / NBRC 16581 / SB1003) protein is Magnesium-chelatase 60 kDa subunit (bchD).